The sequence spans 397 residues: Phosphoglycerate kinase (397 aa).

Substrate contacts are provided by residues 25-27 (DLN), Arg41, 64-67 (HLGR), Arg118, and Arg151. ATP-binding positions include Lys202, Glu324, and 350 to 353 (GGDT).

Belongs to the phosphoglycerate kinase family. As to quaternary structure, monomer.

The protein localises to the cytoplasm. It catalyses the reaction (2R)-3-phosphoglycerate + ATP = (2R)-3-phospho-glyceroyl phosphate + ADP. Its pathway is carbohydrate degradation; glycolysis; pyruvate from D-glyceraldehyde 3-phosphate: step 2/5. The polypeptide is Phosphoglycerate kinase (Janthinobacterium sp. (strain Marseille) (Minibacterium massiliensis)).